A 360-amino-acid polypeptide reads, in one-letter code: Membrane-bound lytic murein transglycosylase C (360 aa).

The N-terminal stretch at 1–16 is a signal peptide; it reads MKKIFALALIAPLLIS. Cys17 is lipidated: N-palmitoyl cysteine. Cys17 is lipidated: S-diacylglycerol cysteine.

The protein belongs to the transglycosylase Slt family.

Its subcellular location is the cell outer membrane. It carries out the reaction Exolytic cleavage of the (1-&gt;4)-beta-glycosidic linkage between N-acetylmuramic acid (MurNAc) and N-acetylglucosamine (GlcNAc) residues in peptidoglycan, from either the reducing or the non-reducing ends of the peptidoglycan chains, with concomitant formation of a 1,6-anhydrobond in the MurNAc residue.. Its function is as follows. Murein-degrading enzyme. May play a role in recycling of muropeptides during cell elongation and/or cell division. This is Membrane-bound lytic murein transglycosylase C from Cronobacter sakazakii (strain ATCC BAA-894) (Enterobacter sakazakii).